Reading from the N-terminus, the 208-residue chain is Adapter protein MecA (208 aa).

Belongs to the MecA family. Homodimer.

Enables the recognition and targeting of unfolded and aggregated proteins to the ClpC protease or to other proteins involved in proteolysis. The chain is Adapter protein MecA from Exiguobacterium sibiricum (strain DSM 17290 / CCUG 55495 / CIP 109462 / JCM 13490 / 255-15).